The primary structure comprises 640 residues: 1,4-alpha-glucan branching enzyme GlgB (640 aa).

Residue Asp-317 is the Nucleophile of the active site. The Proton donor role is filled by Glu-370.

This sequence belongs to the glycosyl hydrolase 13 family. GlgB subfamily. In terms of assembly, monomer.

The catalysed reaction is Transfers a segment of a (1-&gt;4)-alpha-D-glucan chain to a primary hydroxy group in a similar glucan chain.. It functions in the pathway glycan biosynthesis; glycogen biosynthesis. In terms of biological role, catalyzes the formation of the alpha-1,6-glucosidic linkages in glycogen by scission of a 1,4-alpha-linked oligosaccharide from growing alpha-1,4-glucan chains and the subsequent attachment of the oligosaccharide to the alpha-1,6 position. In Nitratidesulfovibrio vulgaris (strain DP4) (Desulfovibrio vulgaris), this protein is 1,4-alpha-glucan branching enzyme GlgB.